The following is a 192-amino-acid chain: Virion infectivity factor (192 aa).

Positions 14–17 (DRMR) are interaction with host APOBEC3F; F1-box. An interaction with host APOBEC3G; G-box region spans residues 40 to 44 (YRHHF). An interaction with host APOBEC3F and APOBEC3G; FG-box region spans residues 54-72 (EVHIPLETAELVITTYWGL). The segment at 74–79 (PGEREW) is interaction with host APOBEC3F; F2-box. The interval 75–114 (GEREWHLGQGVSIEWRQGRYRTQIDPGLADQLIHIYYFDC) is RNA-binding. T96 carries the post-translational modification Phosphothreonine; by host MAP4K1. Zn(2+)-binding residues include H108, C114, C133, and H139. The short motif at 108–139 (HIYYFDCFSESAIRKAILGHKISPRCNYQAGH) is the HCCH motif element. S144 is modified (phosphoserine; by host). The BC-box-like motif motif lies at 144 to 153 (SLQYLALTAL). The multimerization stretch occupies residues 151–164 (TALIAPKKTKPPLP). The tract at residues 151 to 180 (TALIAPKKTKPPLPSVQKLVEDRWNKPQKT) is SOCS box-like. The segment at 164 to 192 (PSVQKLVEDRWNKPQKTRGHRESHTMNGH) is disordered. S165 is modified (phosphoserine; by host MAP4K1). Residues 171–172 (ED) form a membrane association region. Positions 183-192 (HRESHTMNGH) are enriched in basic and acidic residues. A Phosphothreonine; by host modification is found at T188.

Belongs to the primate lentivirus group Vif protein family. Homomultimer; in vitro and presumably in vivo. Interacts with viral RNA and Pr55Gag precursor; these interactions mediate Vif incorporation into the virion. Interacts with the viral reverse transcriptase. Forms cullin-5-RING E3 ubiquitin-protein ligase complex (ECS complex) by interacting with host CUL5, RBX2, elongin BC complex (ELOB and ELOC) and CBFB/CBF-beta. Within the ECS complex, Vif interacts directly with host CUL5, ELOC and APOBEC (APOBEC3F and APOBEC3G) substrates. The ECS complex also contains some single-stranded RNA (ssRNA) that acts as a glue that bridges Vif with APOBEC (APOBEC3F and APOBEC3G) substrates. Interacts with host UBCE7IP1 isoform 3/ZIN and possibly with SAT. Interacts with host tyrosine kinases HCK and FYN; these interactions may decrease level of phosphorylated APOBEC3G incorporation into virions. Interacts with host ABCE1; this interaction may play a role in protecting viral RNA from damage during viral assembly. Interacts with host MDM2; this interaction targets Vif for degradation by the proteasome. Processed in virion by the viral protease. Post-translationally, highly phosphorylated on serine and threonine residues. In terms of processing, polyubiquitinated and degraded by the proteasome in the presence of APOBEC3G.

Its subcellular location is the host cytoplasm. The protein localises to the host cell membrane. It is found in the virion. In terms of biological role, counteracts the innate antiviral activity of host APOBEC3F and APOBEC3G by promoting their ubiquitination and degradation. Acts as a substrate recognition component of an E3 ubiquitin-protein ligase complex: mechanistically, Vif hijacks a host cullin-5-RING E3 ubiquitin-protein ligase complex (ECS complex) and the transcription coactivator CBFB/CBF-beta to form an active E3 ubiquitin-protein ligase complex that targets APOBEC3G and APOBEC3F for polyubiquitination, leading to their degradation by the proteasome. Vif interaction with APOBEC3G also blocks its cytidine deaminase activity in a proteasome-independent manner, suggesting a dual inhibitory mechanism. May interact directly with APOBEC3G mRNA in order to inhibit its translation. Association with CBFB/CBF-beta also inhibits the transcription coactivator activity of CBFB/CBF-beta. Seems to play a role in viral morphology by affecting the stability of the viral nucleoprotein core. Finally, Vif also contributes to the G2 cell cycle arrest observed in HIV infected cells. The protein is Virion infectivity factor of Homo sapiens (Human).